Here is a 372-residue protein sequence, read N- to C-terminus: DNA-directed RNA polymerase subunit alpha (372 aa).

Residues methionine 1–aspartate 268 are alpha N-terminal domain (alpha-NTD). The segment at lysine 280–glutamate 372 is alpha C-terminal domain (alpha-CTD).

This sequence belongs to the RNA polymerase alpha chain family. As to quaternary structure, homodimer. The RNAP catalytic core consists of 2 alpha, 1 beta, 1 beta' and 1 omega subunit. When a sigma factor is associated with the core the holoenzyme is formed, which can initiate transcription.

The catalysed reaction is RNA(n) + a ribonucleoside 5'-triphosphate = RNA(n+1) + diphosphate. In terms of biological role, DNA-dependent RNA polymerase catalyzes the transcription of DNA into RNA using the four ribonucleoside triphosphates as substrates. This is DNA-directed RNA polymerase subunit alpha from Ehrlichia chaffeensis (strain ATCC CRL-10679 / Arkansas).